The following is a 459-amino-acid chain: Exodeoxyribonuclease 7 large subunit (459 aa).

It belongs to the XseA family. Heterooligomer composed of large and small subunits.

Its subcellular location is the cytoplasm. The catalysed reaction is Exonucleolytic cleavage in either 5'- to 3'- or 3'- to 5'-direction to yield nucleoside 5'-phosphates.. In terms of biological role, bidirectionally degrades single-stranded DNA into large acid-insoluble oligonucleotides, which are then degraded further into small acid-soluble oligonucleotides. In Pseudomonas fluorescens (strain ATCC BAA-477 / NRRL B-23932 / Pf-5), this protein is Exodeoxyribonuclease 7 large subunit.